We begin with the raw amino-acid sequence, 338 residues long: High mobility group B protein 9 (338 aa).

An ARID domain is found at 38 to 129 (VKDSSVFWDT…LLFHYEQVHL (92 aa)). The disordered stretch occupies residues 233–259 (TGRRRRRLGKRRRSRRREDPNYPKPNR). Basic residues predominate over residues 235-247 (RRRRRLGKRRRSR). Positions 255–322 (PKPNRSGYNF…RYQRELNEYR (68 aa)) form a DNA-binding region, HMG box.

In terms of tissue distribution, predominantly expressed in leaves, flowers and seedlings.

It is found in the nucleus. Its function is as follows. Binds preferentially DNA with A/T-rich content. Required for karyogamy during female gametophyte development, when the two polar nuclei fuse to form the diploid central cell nucleus. This chain is High mobility group B protein 9 (HMGB9), found in Arabidopsis thaliana (Mouse-ear cress).